A 332-amino-acid chain; its full sequence is Ribosomal RNA small subunit methyltransferase H (332 aa).

S-adenosyl-L-methionine contacts are provided by residues 36–38 (GGY), Asp54, Phe81, Asp102, and Gln109. The tract at residues 297–318 (ARSAKLRGAERTEAPAHAAGDL) is disordered.

This sequence belongs to the methyltransferase superfamily. RsmH family.

It is found in the cytoplasm. The enzyme catalyses cytidine(1402) in 16S rRNA + S-adenosyl-L-methionine = N(4)-methylcytidine(1402) in 16S rRNA + S-adenosyl-L-homocysteine + H(+). Specifically methylates the N4 position of cytidine in position 1402 (C1402) of 16S rRNA. In Rhodopseudomonas palustris (strain TIE-1), this protein is Ribosomal RNA small subunit methyltransferase H.